The following is a 180-amino-acid chain: Large ribosomal subunit protein uL15 (180 aa).

Residues 1–62 (MKKERLEQAA…KTAGRGSKGQ (62 aa)) form a disordered region. A compositionally biased stretch (basic residues) spans 35–44 (GAKKEKKRVG).

Belongs to the universal ribosomal protein uL15 family. Part of the 50S ribosomal subunit.

Binds to the 23S rRNA. In Leptospira borgpetersenii serovar Hardjo-bovis (strain JB197), this protein is Large ribosomal subunit protein uL15.